The primary structure comprises 264 residues: MQQYLDLMKHILAEGVDKSDRTGTGTRSVFGYQMRFDLSKGFPLVTTKKCHMRSIIHELLWFLKGDTNIAYLRENKVSIWDEWADENGDLGPVYGAQWRSWPTQSGDAIDQIAQVIAQIKSQPDSRRLIVSAWNVGELDKMALAPCHAFFQFYVADGKLSCQLYQRSCDVFLGLPFNIASYALLTMMVAQQCDLALGDFVWTGGDTHLYSNHMEQTALQLSREPRQLPTMTILRKPASIFDYQFEDFELTHYDPHPHIKAPVAV.

Residue Arg-21 participates in dUMP binding. Residue His-51 participates in (6R)-5,10-methylene-5,6,7,8-tetrahydrofolate binding. 126-127 (RR) serves as a coordination point for dUMP. Cys-146 acts as the Nucleophile in catalysis. DUMP-binding positions include 166–169 (RSCD), Asn-177, and 207–209 (HLY). Asp-169 contacts (6R)-5,10-methylene-5,6,7,8-tetrahydrofolate. Ala-263 lines the (6R)-5,10-methylene-5,6,7,8-tetrahydrofolate pocket.

The protein belongs to the thymidylate synthase family. Bacterial-type ThyA subfamily. As to quaternary structure, homodimer.

It is found in the cytoplasm. It carries out the reaction dUMP + (6R)-5,10-methylene-5,6,7,8-tetrahydrofolate = 7,8-dihydrofolate + dTMP. Its pathway is pyrimidine metabolism; dTTP biosynthesis. Its function is as follows. Catalyzes the reductive methylation of 2'-deoxyuridine-5'-monophosphate (dUMP) to 2'-deoxythymidine-5'-monophosphate (dTMP) while utilizing 5,10-methylenetetrahydrofolate (mTHF) as the methyl donor and reductant in the reaction, yielding dihydrofolate (DHF) as a by-product. This enzymatic reaction provides an intracellular de novo source of dTMP, an essential precursor for DNA biosynthesis. The polypeptide is Thymidylate synthase (Shewanella sp. (strain ANA-3)).